The primary structure comprises 62 residues: MGKQCFVTGRKASTGNRRSHALNSTKRRWNANLQKVRILVDGKPKKVWVSARALKSGKVTRV.

The disordered stretch occupies residues 1–22; it reads MGKQCFVTGRKASTGNRRSHAL.

Belongs to the bacterial ribosomal protein bL28 family.

In Staphylococcus aureus (strain N315), this protein is Large ribosomal subunit protein bL28.